The primary structure comprises 159 residues: Outer envelope pore protein 16-3, chloroplastic/mitochondrial (159 aa).

Met-1 bears the N-acetylmethionine mark. Residues 1-65 form a contains beta strands region; it reads MDPAEMRYLE…IRTLKMMGTH (65 aa). 3 helical membrane-spanning segments follow: residues 24-40, 62-79, and 92-109; these read ITGF…LATW, MGTH…YIGV, and FYNG…VLGY.

This sequence belongs to the Tim17/Tim22/Tim23 family. Plastid outer envelope porin OEP16 (TC 1.B.30) subfamily. In terms of assembly, homodimer and oligomers in membrane. Part of both the NADH-ubiquinone oxidoreductase complex I and of the TIM17:23 complex. Interacts with TIM23-2.

It is found in the plastid. It localises to the chloroplast outer membrane. Its subcellular location is the mitochondrion outer membrane. The protein resides in the mitochondrion inner membrane. In terms of biological role, voltage-dependent high-conductance channel with a slight cation-selectivity; selective for amino acids but excludes triosephosphates or uncharged sugars. Non-essential amino acid-selective channel protein and translocation pore for NADPH:protochlorophyllide oxidoreductase A (PORA) and possibly PORB. The protein is Outer envelope pore protein 16-3, chloroplastic/mitochondrial (OEP163) of Arabidopsis thaliana (Mouse-ear cress).